The primary structure comprises 323 residues: Methenyltetrahydromethanopterin cyclohydrolase (323 aa).

This sequence belongs to the MCH family.

The protein localises to the cytoplasm. It catalyses the reaction 5,10-methenyl-5,6,7,8-tetrahydromethanopterin + H2O = N(5)-formyl-5,6,7,8-tetrahydromethanopterin + H(+). The protein operates within one-carbon metabolism; methanogenesis from CO(2); 5,10-methenyl-5,6,7,8-tetrahydromethanopterin from CO(2): step 3/3. Catalyzes the reversible interconversion of 5-formyl-H(4)MPT to methenyl-H(4)MPT(+). The polypeptide is Methenyltetrahydromethanopterin cyclohydrolase (Methanococcus maripaludis (strain C5 / ATCC BAA-1333)).